Here is a 2254-residue protein sequence, read N- to C-terminus: Voltage-dependent T-type calcium channel subunit alpha-1G (2254 aa).

The interval 1 to 48 (MDEEEDGAGAEESGQPRSFTQLNDLSGAGGRQGPGSTEKDPGSADSEA) is disordered. Residues 1–80 (MDEEEDGAGA…RSWCLRTVCN (80 aa)) lie on the Cytoplasmic side of the membrane. A compositionally biased stretch (polar residues) spans 15-24 (QPRSFTQLND). The stretch at 68-398 (SRPRSWCLRT…LCLVVIATQF (331 aa)) is one I repeat. Residues 81–101 (PWFERVSMLVILLNCVTLGMF) traverse the membrane as a helical segment. Over 102–119 (RPCEDIACDSQRCRILQA) the chain is Extracellular. Residues 120–141 (FDDFIFAFFAVEMVVKMVALGI) traverse the membrane as a helical segment. The Cytoplasmic portion of the chain corresponds to 142 to 150 (FGKKCYLGD). Residues 151 to 170 (TWNRLDFFIVIAGMLEYSLD) traverse the membrane as a helical segment. Residues 171-175 (LQNVS) are Extracellular-facing. N-linked (GlcNAc...) asparagine glycosylation is present at asparagine 173. A helical transmembrane segment spans residues 176–193 (FSAVRTVRVLRPLRAINR). Over 194 to 213 (VPSMRILVTLLLDTLPMLGN) the chain is Cytoplasmic. Residues 214–234 (VLLLCFFVFFIFGIVGVQLWA) form a helical membrane-spanning segment. Residues 235–370 (GLLRNRCFLP…YFVMDAHSFY (136 aa)) lie on the Extracellular side of the membrane. Residues asparagine 246, asparagine 306, asparagine 310, and asparagine 322 are each glycosylated (N-linked (GlcNAc...) asparagine). Residues 371 to 395 (NFIYFILLIIVGSFFMINLCLVVIA) traverse the membrane as a helical segment. Residues 396 to 744 (TQFSETKQRE…DTFRKIVDSK (349 aa)) are Cytoplasmic-facing. Serine 467 carries the post-translational modification Phosphoserine. The segment covering 494–506 (LVHHHHHHHHHYH) has biased composition (basic residues). Disordered regions lie at residues 494-513 (LVHHHHHHHHHYHLGNGTLR), 525-553 (DANGSRRLMLPPPSTPTPSGGPPRGAESV), 579-598 (ASGRTVGSGKVYPTVHTSPP), and 699-721 (DAQHSDLRDPHSRRRQRSLGPDA). Pro residues predominate over residues 534–545 (LPPPSTPTPSGG). Serine 716 carries the post-translational modification Phosphoserine. The II repeat unit spans residues 730-968 (WRLICDTFRK…LLVAILVEGF (239 aa)). A helical transmembrane segment spans residues 745 to 765 (YFGRGIMIAILVNTLSMGIEY). At 766 to 778 (HEQPEELTNALEI) the chain is on the extracellular side. The helical transmembrane segment at 779–800 (SNIVFTSLFALEMLLKLLVYGP) threads the bilayer. Over 801–806 (FGYIKN) the chain is Cytoplasmic. The helical transmembrane segment at 807 to 825 (PYNIFDGVIVVISVWEIVG) threads the bilayer. The Extracellular segment spans residues 826–833 (QQGGGLSV). A helical transmembrane segment spans residues 834–857 (LRTFRLMRVLKLVRFLPALQRQLV). Residues 858-868 (VLMKTMDNVAT) are Cytoplasmic-facing. Residues 869–889 (FCMLLMLFIFIFSILGMHLFG) form a helical membrane-spanning segment. Residues 890–940 (CKFASERDGDTLPDRKNFDSLLWAIVTVFQILTQEDWNKVLYNGMASTSSW) lie on the Extracellular side of the membrane. Residues 941–965 (AALYFIALMTFGNYVLFNLLVAILV) traverse the membrane as a helical segment. At 966 to 1251 (EGFQAEGDAT…SRFRLLCHRI (286 aa)) the chain is on the cytoplasmic side. Residues 1024 to 1209 (TPMSHPKSSS…GDDDNDEGNL (186 aa)) are disordered. 2 stretches are compositionally biased toward low complexity: residues 1041-1052 (GSGSRRTSSSGS) and 1065-1091 (PPSARSSPHSPWSAASSWTSRRSSRNS). 2 stretches are compositionally biased toward acidic residues: residues 1117-1126 (ESQDEEESSE) and 1196-1206 (PQLDGDDDNDE). Residues serine 1118, serine 1124, and serine 1125 each carry the phosphoserine modification. An III repeat occupies 1242-1519 (SRFRLLCHRI…MFVGVVVENF (278 aa)). A helical membrane pass occupies residues 1252-1274 (ITHKMFDHVVLVIIFLNCITIAM). Residues 1275–1292 (ERPKIDPHSAERIFLTLS) lie on the Extracellular side of the membrane. A helical transmembrane segment spans residues 1293–1313 (NYIFTAVFLAEMTVKVVALGW). The Cytoplasmic portion of the chain corresponds to 1314–1323 (CFGEQAYLRS). Residues 1324–1343 (SWNVLDGLLVLISVIDILVS) form a helical membrane-spanning segment. At 1344–1357 (MVSDSGTKILGMLR) the chain is on the extracellular side. A helical transmembrane segment spans residues 1358–1379 (VLRLLRTLRPLRVISRAQGLKL). Topologically, residues 1380 to 1389 (VVETLMSSLK) are cytoplasmic. The helical transmembrane segment at 1390–1413 (PIGNIVVICCAFFIIFGILGVQLF) threads the bilayer. The Extracellular portion of the chain corresponds to 1414-1490 (KGKFFVCQGE…DQQPIMNHNP (77 aa)). Residues asparagine 1427 and asparagine 1430 are each glycosylated (N-linked (GlcNAc...) asparagine). A helical transmembrane segment spans residues 1491 to 1516 (WMLLYFISFLLIVAFFVLNMFVGVVV). Topologically, residues 1517–1578 (ENFHKCRQHQ…RLLVHHLCTS (62 aa)) are cytoplasmic. Residues 1564–1822 (DYSRFRLLVH…VVIAVLMKHL (259 aa)) form an IV repeat. Residues 1579-1599 (HYLDLFITGVIGLNVVTMAME) form a helical membrane-spanning segment. At 1600 to 1613 (HYQQPQILDEALKI) the chain is on the extracellular side. The chain crosses the membrane as a helical span at residues 1614 to 1635 (CNYIFTVIFVFESVFKLVAFGF). Over 1636–1642 (RRFFQDR) the chain is Cytoplasmic. Residues 1643-1661 (WNQLDLAIVLLSIMGITLE) traverse the membrane as a helical segment. Residues 1662–1675 (EIEVNLSLPINPTI) lie on the Extracellular side of the membrane. The N-linked (GlcNAc...) asparagine glycan is linked to asparagine 1666. A helical membrane pass occupies residues 1676–1699 (IRIMRVLRIARVLKLLKMAVGMRA). The Cytoplasmic portion of the chain corresponds to 1700 to 1713 (LLHTVMQALPQVGN). A helical transmembrane segment spans residues 1714–1734 (LGLLFMLLFFIFAALGVELFG). Residues 1735–1794 (DLECDETHPCEGLGRHATFRNFGMAFLTLFRVSTGDNWNGIMKDTLRDCDQESTCYNTVI) lie on the Extracellular side of the membrane. Residues 1795-1822 (SPIYFVSFVLTAQFVLVNVVIAVLMKHL) form a helical membrane-spanning segment. Residues 1823–2254 (EESNKEAKEE…LSSDPTDMDP (432 aa)) lie on the Cytoplasmic side of the membrane. A disordered region spans residues 2153-2254 (DSGSQPRLCP…LSSDPTDMDP (102 aa)). Low complexity predominate over residues 2184–2193 (SPPSISIDPP). Composition is skewed to polar residues over residues 2220–2232 (PSVSSPLDSTAAS) and 2240–2254 (LSLSGLSSDPTDMDP).

Belongs to the calcium channel alpha-1 subunit (TC 1.A.1.11) family. CACNA1G subfamily. In terms of processing, in response to raising of intracellular calcium, the T-type channels are activated by CaM-kinase II. As to expression, highly expressed in brain. Moderate expression in heart; low expression in placenta, kidney and lung.

The protein resides in the cell membrane. Its subcellular location is the cytoplasm. The enzyme catalyses Ca(2+)(in) = Ca(2+)(out). In terms of biological role, voltage-sensitive calcium channels (VSCC) mediate the entry of calcium ions into excitable cells and are also involved in a variety of calcium-dependent processes, including muscle contraction, hormone or neurotransmitter release, gene expression, cell motility, cell division and cell death. The isoform alpha-1G gives rise to T-type calcium currents. T-type calcium channels belong to the 'low-voltage activated (LVA)' group and are strongly blocked by nickel and mibefradil. A particularity of this type of channels is an opening at quite negative potentials and a voltage-dependent inactivation. T-type channels serve pacemaking functions in both central neurons and cardiac nodal cells and support calcium signaling in secretory cells and vascular smooth muscle. They may also be involved in the modulation of firing patterns of neurons which is important for information processing as well as in cell growth processes. The chain is Voltage-dependent T-type calcium channel subunit alpha-1G (Cacna1g) from Rattus norvegicus (Rat).